Here is a 113-residue protein sequence, read N- to C-terminus: UPF0122 protein Sez_1013 (113 aa).

This sequence belongs to the UPF0122 family.

Functionally, might take part in the signal recognition particle (SRP) pathway. This is inferred from the conservation of its genetic proximity to ftsY/ffh. May be a regulatory protein. This chain is UPF0122 protein Sez_1013, found in Streptococcus equi subsp. zooepidemicus (strain MGCS10565).